A 61-amino-acid polypeptide reads, in one-letter code: UPF0391 membrane protein Aave_0978 (61 aa).

The next 2 membrane-spanning stretches (helical) occupy residues 5–25 (AIIF…GVAA) and 33–53 (ILFF…VLGV).

The protein belongs to the UPF0391 family.

Its subcellular location is the cell membrane. The polypeptide is UPF0391 membrane protein Aave_0978 (Paracidovorax citrulli (strain AAC00-1) (Acidovorax citrulli)).